Here is a 698-residue protein sequence, read N- to C-terminus: Elongation factor G (698 aa).

Positions 11-291 (THFRNIGIAA…AVVDYLPSPL (281 aa)) constitute a tr-type G domain. Residues 20-27 (AHIDAGKT), 90-94 (DTPGH), and 144-147 (NKMD) each bind GTP.

It belongs to the TRAFAC class translation factor GTPase superfamily. Classic translation factor GTPase family. EF-G/EF-2 subfamily.

It localises to the cytoplasm. In terms of biological role, catalyzes the GTP-dependent ribosomal translocation step during translation elongation. During this step, the ribosome changes from the pre-translocational (PRE) to the post-translocational (POST) state as the newly formed A-site-bound peptidyl-tRNA and P-site-bound deacylated tRNA move to the P and E sites, respectively. Catalyzes the coordinated movement of the two tRNA molecules, the mRNA and conformational changes in the ribosome. This chain is Elongation factor G, found in Deinococcus radiodurans (strain ATCC 13939 / DSM 20539 / JCM 16871 / CCUG 27074 / LMG 4051 / NBRC 15346 / NCIMB 9279 / VKM B-1422 / R1).